A 107-amino-acid polypeptide reads, in one-letter code: Nucleoid-associated protein RF_1365 (107 aa).

Belongs to the YbaB/EbfC family. In terms of assembly, homodimer.

It localises to the cytoplasm. The protein resides in the nucleoid. Its function is as follows. Binds to DNA and alters its conformation. May be involved in regulation of gene expression, nucleoid organization and DNA protection. The sequence is that of Nucleoid-associated protein RF_1365 from Rickettsia felis (strain ATCC VR-1525 / URRWXCal2) (Rickettsia azadi).